Reading from the N-terminus, the 626-residue chain is Zinc finger protein 471 (626 aa).

In terms of domain architecture, KRAB spans 14–85 (VTFKDVAIDF…TSEMTRSPFS (72 aa)). 15 C2H2-type zinc fingers span residues 206-228 (FKCNECDKTFTHSSSLTVHFRIH), 234-256 (YACEECGKAFKQRQHLAQHHRTH), 262-284 (FECKECRKAFKQSEHLIQHQRIH), 290-312 (YKCKECRKAFRQPAHLAQHQRIH), 318-340 (YECKECGKAFSDGSSFARHQRCH), 346-369 (YECIECGKAFRYNTSFIRHWRSYH), 375-397 (FNCIDCGKAFSVHIGLILHRRIH), 403-425 (YKCGVCGKTFSSGSSRTVHQRIH), 431-453 (YECDICGKDFSHHASLTQHQRVH), 459-481 (YECKECGKAFRQNVHLVSHLRIH), 487-509 (YECKECGKAFRISSQLATHQRIH), 515-537 (YECIECGNAFKQRSHLAQHQKTH), 543-565 (YECNECGKAFSQTSNLTQHQRIH), 571-593 (YKCTECGKAFSDSSSCAQHQRLH), and 599-621 (YQCFECGKAFRRKLSLICHQRSH).

It belongs to the krueppel C2H2-type zinc-finger protein family.

The protein localises to the nucleus. In terms of biological role, may be involved in transcriptional regulation. This is Zinc finger protein 471 (ZNF471) from Homo sapiens (Human).